The chain runs to 446 residues: MRVLHVTSEVFPFSRSGGLGDVLGALPAVQATLGAQVSVLSPWYGSLAGAPEQIWAGDVADVGPVRVGELRQDGVRFLFLGLPEFEREGLYHPDDVWRFCTYGRAVLPVLRALNEVPDVLHGHDWQAGLVVAHAHEAGWRTVYTVHNLQYQGRWNLAEASGWSGLGPAWLTHEGAEFYGDLNLMKAGLIAANHVTTVSPQYAREITTQQYGEGLQGVLLRLTLEGRLSGIINGLDQERWNPRTDPDVPAYSDLAGKAAATQALRTEFGLDKAPVLGVVSRLADQKGMDLLIEALPRLVHNWNVVVLGGGDPLLTAALEGWAQHPRVSFAQGMNEALAHQIYAGSDAFAMPSRFEPCGLSQMIAMRYGTLPVVRETGGLVDTVPPDVGFRFQPATPEALVEACQQARAAFEDQSDWEARVARAMALDFSWDGPAREYLALYERVVTG.

Arg-15 lines the ADP-alpha-D-glucose pocket.

Belongs to the glycosyltransferase 1 family. Bacterial/plant glycogen synthase subfamily.

It catalyses the reaction [(1-&gt;4)-alpha-D-glucosyl](n) + ADP-alpha-D-glucose = [(1-&gt;4)-alpha-D-glucosyl](n+1) + ADP + H(+). Its pathway is glycan biosynthesis; glycogen biosynthesis. Functionally, synthesizes alpha-1,4-glucan chains using ADP-glucose. In Deinococcus deserti (strain DSM 17065 / CIP 109153 / LMG 22923 / VCD115), this protein is Glycogen synthase.